The sequence spans 265 residues: 3-methyl-2-oxobutanoate hydroxymethyltransferase (265 aa).

Positions 45 and 84 each coordinate Mg(2+). Residues 45 to 46 (DS), Asp84, and Lys114 each bind 3-methyl-2-oxobutanoate. Glu116 provides a ligand contact to Mg(2+). Glu183 acts as the Proton acceptor in catalysis.

This sequence belongs to the PanB family. Homodecamer; pentamer of dimers. Requires Mg(2+) as cofactor.

The protein resides in the cytoplasm. The enzyme catalyses 3-methyl-2-oxobutanoate + (6R)-5,10-methylene-5,6,7,8-tetrahydrofolate + H2O = 2-dehydropantoate + (6S)-5,6,7,8-tetrahydrofolate. The protein operates within cofactor biosynthesis; (R)-pantothenate biosynthesis; (R)-pantoate from 3-methyl-2-oxobutanoate: step 1/2. Its function is as follows. Catalyzes the reversible reaction in which hydroxymethyl group from 5,10-methylenetetrahydrofolate is transferred onto alpha-ketoisovalerate to form ketopantoate. This is 3-methyl-2-oxobutanoate hydroxymethyltransferase from Salinibacter ruber (strain DSM 13855 / M31).